The following is a 181-amino-acid chain: Trafficking protein particle complex subunit 3 homolog (181 aa).

Cys70 carries S-palmitoyl cysteine lipidation.

Belongs to the TRAPP small subunits family. BET3 subfamily. In terms of assembly, homodimer. Part of the multisubunit TRAPP (transport protein particle) complex.

It is found in the golgi apparatus. The protein localises to the cis-Golgi network. It localises to the endoplasmic reticulum. May play a role in vesicular transport from endoplasmic reticulum to Golgi. Required for the systemic spread of the RNAi response. The sequence is that of Trafficking protein particle complex subunit 3 homolog (trpp-3) from Caenorhabditis elegans.